The following is a 429-amino-acid chain: Probable M18 family aminopeptidase 2 (429 aa).

3 residues coordinate Zn(2+): H82, H156, and H401.

Belongs to the peptidase M18 family. Zn(2+) serves as cofactor.

The protein is Probable M18 family aminopeptidase 2 of Ectopseudomonas mendocina (strain ymp) (Pseudomonas mendocina).